The chain runs to 143 residues: Large ribosomal subunit protein bL28c (143 aa).

The N-terminal 66 residues, 1-66 (MTTMATQGAW…SFPGIQPIVA (66 aa)), are a transit peptide targeting the chloroplast.

Belongs to the bacterial ribosomal protein bL28 family. Part of the 50S ribosomal subunit.

The protein localises to the plastid. It localises to the chloroplast. The polypeptide is Large ribosomal subunit protein bL28c (RPL28) (Arabidopsis thaliana (Mouse-ear cress)).